A 239-amino-acid polypeptide reads, in one-letter code: Derlin-2 (239 aa).

Residues 1 to 57 (MAYQSLRLEYLQIPPVSRAYTTACVLTTAAVQLELITPFQLYFNPELIFKHFQIWRL) lie on the Cytoplasmic side of the membrane. A helical membrane pass occupies residues 58–78 (ITNFLFFGPVGFNFLFNMIFL). Residues 79–96 (YRYCRMLEEGSFRGRTAD) are Lumenal-facing. Residues 97 to 117 (FVFMFLFGGFLMTLFGLFVSL) traverse the membrane as a helical segment. Topologically, residues 118-150 (VFLGQAFTIMLVYVWSRRNPYVRMNFFGLLNFQ) are cytoplasmic. The chain crosses the membrane as a helical span at residues 151-171 (APFLPWVLMGFSLLLGNSIIV). Position 172 (Asp-172) is a topological domain, lumenal. Residues 173-193 (LLGIAVGHIYFFLEDIFPNQP) form a helical membrane-spanning segment. The Cytoplasmic segment spans residues 194 to 239 (GGIRILKTPSILRTIFDTPDEDPNYNPLPEERPGGFAWGEGQRLGG). A disordered region spans residues 214-239 (EDPNYNPLPEERPGGFAWGEGQRLGG). Over residues 229–239 (FAWGEGQRLGG) the composition is skewed to gly residues.

The protein belongs to the derlin family. In terms of assembly, forms homo- and heterooligomers with DERL3 and, to a lesser extent, with DERL1. Interacts with the SEL1L/SYVN1 and VCP/SELENOS protein complexes. Mediates association between VCP and EDEM1, as well as that between VCP and the misfolded glycoproteins. Interacts with OS9. Interacts with SELENOK and SELENOS. Interacts with the signal recognition particle/SRP and the SRP receptor; in the process of endoplasmic reticulum stress-induced pre-emptive quality control. Interacts with CCDC47. As to expression, widely expressed, with lowest levels in brain and heart.

The protein localises to the endoplasmic reticulum membrane. Its function is as follows. Functional component of endoplasmic reticulum-associated degradation (ERAD) for misfolded lumenal glycoproteins, but not that of misfolded nonglycoproteins. May act by forming a channel that allows the retrotranslocation of misfolded glycoproteins into the cytosol where they are ubiquitinated and degraded by the proteasome. May mediate the interaction between VCP and misfolded glycoproteins. May also be involved in endoplasmic reticulum stress-induced pre-emptive quality control, a mechanism that selectively attenuates the translocation of newly synthesized proteins into the endoplasmic reticulum and reroutes them to the cytosol for proteasomal degradation. The protein is Derlin-2 of Mus musculus (Mouse).